Consider the following 64-residue polypeptide: Conotoxin Ts-011 (64 aa).

The N-terminal stretch at 1–22 (MHCLPVLVILLLLIASTPSVDA) is a signal peptide. A propeptide spanning residues 23 to 52 (RPKTKDDVPPASFHGADDANRILQTLWNLR) is cleaved from the precursor. The residue at position 63 (Ile-63) is an Isoleucine amide.

The protein belongs to the conotoxin T superfamily. Contains 2 disulfide bonds that can be either 'C1-C3, C2-C4' or 'C1-C4, C2-C3', since these disulfide connectivities have been observed for conotoxins with cysteine framework V (for examples, see AC P0DQQ7 and AC P81755). Expressed by the venom duct.

The protein resides in the secreted. The chain is Conotoxin Ts-011 from Conus tessulatus (Tessellate cone).